The following is a 346-amino-acid chain: Cytochrome c551 peroxidase (346 aa).

An N-terminal signal peptide occupies residues 1–23 (MQSSQLLPLGSLLLSFATPLAQA). Heme c contacts are provided by C74, C77, H78, C220, C223, H224, H284, and M298.

Requires heme c as cofactor. Binds 2 heme groups per subunit. Sequencing of the whole protein indicates about 20% starts on Val-247.

The protein resides in the periplasm. It catalyses the reaction 2 Fe(II)-[cytochrome c] + H2O2 + 2 H(+) = 2 Fe(III)-[cytochrome c] + 2 H2O. Catalyzes the peroxidative oxidation of azurin and cytochrome c551. Likely to provide protection against toxic peroxides. The polypeptide is Cytochrome c551 peroxidase (ccpA) (Pseudomonas aeruginosa (strain ATCC 15692 / DSM 22644 / CIP 104116 / JCM 14847 / LMG 12228 / 1C / PRS 101 / PAO1)).